Here is a 266-residue protein sequence, read N- to C-terminus: GTP-binding protein Rhes (266 aa).

26–33 serves as a coordination point for GTP; sequence GASRVGKS. The Effector region motif lies at 48-56; sequence YTPTIEDFH. GTP-binding positions include 73–77 and 140–143; these read DTSGN and NKND. The interval 189–235 is interaction with GNB1, GNB2 and GNB3; that stretch reads MAKLPHEMSPALHHKISVQYGDAFHPRPFCMRRTKVAGAYGMVSPFA. At cysteine 263 the chain carries Cysteine methyl ester. Cysteine 263 carries the S-farnesyl cysteine lipid modification. Positions 264–266 are cleaved as a propeptide — removed in mature form; the sequence is SIQ.

The protein belongs to the small GTPase superfamily. RasD family. In terms of assembly, monomer (Potential). Interacts with PIK3CA and UBE2I. Interacts with GNB1, GNB2 and GNB3. In terms of processing, farnesylated. Farnesylation is required for membrane targeting. Highly expressed in brain; prominently in the striatum and weakly in kidney, thyroid, lung, heart and testis. Not expressed in liver. Expressed in pancreatic cell lines and in a embryonic stem cell line.

It localises to the cell membrane. In terms of biological role, GTPase signaling protein that binds to and hydrolyzes GTP. Regulates signaling pathways involving G-proteins-coupled receptor and heterotrimeric proteins such as GNB1, GNB2 and GNB3. May be involved in selected striatal competencies, mainly locomotor activity and motor coordination. The sequence is that of GTP-binding protein Rhes (Rasd2) from Mus musculus (Mouse).